The sequence spans 434 residues: Beta-enolase (434 aa).

An N-acetylalanine modification is found at Ala-2. Thr-72 is modified (phosphothreonine). Phosphoserine occurs at positions 83 and 157. His-158 and Glu-167 together coordinate substrate. A Phosphoserine modification is found at Ser-176. Residue Thr-205 is modified to Phosphothreonine. Residue Glu-210 is the Proton donor of the active site. Thr-229 is subject to Phosphothreonine. Tyr-236 bears the Phosphotyrosine mark. Asp-245 lines the Mg(2+) pocket. Residue Ser-263 is modified to Phosphoserine. Residues Glu-293 and Asp-318 each coordinate substrate. 2 residues coordinate Mg(2+): Glu-293 and Asp-318. The Proton acceptor role is filled by Lys-343. Substrate-binding positions include 370–373 and Lys-394; that span reads SHRS.

The protein belongs to the enolase family. As to quaternary structure, mammalian enolase is composed of 3 isozyme subunits, alpha, beta and gamma, which can form homodimers or heterodimers which are cell-type and development-specific. Interacts with PNKD. Mg(2+) serves as cofactor. In terms of tissue distribution, the alpha/alpha homodimer is expressed in embryo and in most adult tissues. The alpha/beta heterodimer and the beta/beta homodimer are found in striated muscle, and the alpha/gamma heterodimer and the gamma/gamma homodimer in neurons.

The protein localises to the cytoplasm. The catalysed reaction is (2R)-2-phosphoglycerate = phosphoenolpyruvate + H2O. The protein operates within carbohydrate degradation; glycolysis; pyruvate from D-glyceraldehyde 3-phosphate: step 4/5. Glycolytic enzyme that catalyzes the conversion of 2-phosphoglycerate to phosphoenolpyruvate. Appears to have a function in striated muscle development and regeneration. The polypeptide is Beta-enolase (ENO3) (Oryctolagus cuniculus (Rabbit)).